Reading from the N-terminus, the 728-residue chain is 1,4-alpha-glucan branching enzyme GlgB (728 aa).

The Nucleophile role is filled by Asp405. Glu458 acts as the Proton donor in catalysis.

It belongs to the glycosyl hydrolase 13 family. GlgB subfamily. Monomer.

The enzyme catalyses Transfers a segment of a (1-&gt;4)-alpha-D-glucan chain to a primary hydroxy group in a similar glucan chain.. It participates in glycan biosynthesis; glycogen biosynthesis. In terms of biological role, catalyzes the formation of the alpha-1,6-glucosidic linkages in glycogen by scission of a 1,4-alpha-linked oligosaccharide from growing alpha-1,4-glucan chains and the subsequent attachment of the oligosaccharide to the alpha-1,6 position. In Salmonella typhi, this protein is 1,4-alpha-glucan branching enzyme GlgB.